We begin with the raw amino-acid sequence, 224 residues long: Uracil-DNA glycosylase (224 aa).

The active-site Proton acceptor is Asp64.

Belongs to the uracil-DNA glycosylase (UDG) superfamily. UNG family.

The protein localises to the cytoplasm. It carries out the reaction Hydrolyzes single-stranded DNA or mismatched double-stranded DNA and polynucleotides, releasing free uracil.. Excises uracil residues from the DNA which can arise as a result of misincorporation of dUMP residues by DNA polymerase or due to deamination of cytosine. The polypeptide is Uracil-DNA glycosylase (Clostridioides difficile (strain 630) (Peptoclostridium difficile)).